A 399-amino-acid chain; its full sequence is Methylthioribose kinase (399 aa).

ATP contacts are provided by residues asparagine 40, lysine 57, and 111 to 113; that span reads EDL. Aspartate 229 is a substrate binding site. 246 to 248 lines the ATP pocket; it reads DAE. Arginine 344 lines the substrate pocket.

It belongs to the methylthioribose kinase family. As to quaternary structure, homodimer.

The catalysed reaction is 5-(methylsulfanyl)-D-ribose + ATP = 5-(methylsulfanyl)-alpha-D-ribose 1-phosphate + ADP + H(+). Its pathway is amino-acid biosynthesis; L-methionine biosynthesis via salvage pathway; S-methyl-5-thio-alpha-D-ribose 1-phosphate from S-methyl-5'-thioadenosine (hydrolase route): step 2/2. Its function is as follows. Catalyzes the phosphorylation of methylthioribose into methylthioribose-1-phosphate. In Yersinia enterocolitica serotype O:8 / biotype 1B (strain NCTC 13174 / 8081), this protein is Methylthioribose kinase.